The primary structure comprises 189 residues: Protein GrpE (189 aa).

A disordered region spans residues 1–31; sequence MSKKHMKGNGGEVPENSEMSGSEELVAVEPG.

The protein belongs to the GrpE family. In terms of assembly, homodimer.

It localises to the cytoplasm. Participates actively in the response to hyperosmotic and heat shock by preventing the aggregation of stress-denatured proteins, in association with DnaK and GrpE. It is the nucleotide exchange factor for DnaK and may function as a thermosensor. Unfolded proteins bind initially to DnaJ; upon interaction with the DnaJ-bound protein, DnaK hydrolyzes its bound ATP, resulting in the formation of a stable complex. GrpE releases ADP from DnaK; ATP binding to DnaK triggers the release of the substrate protein, thus completing the reaction cycle. Several rounds of ATP-dependent interactions between DnaJ, DnaK and GrpE are required for fully efficient folding. This is Protein GrpE from Syntrophobacter fumaroxidans (strain DSM 10017 / MPOB).